The following is a 324-amino-acid chain: Sperm acrosome membrane-associated protein 6 (324 aa).

Positions 1 to 26 (MALLALASAVPSALLALAVFRVPAWA) are cleaved as a signal peptide. A CXXC motif motif is present at residues 27-30 (CLLC). Cystine bridges form between cysteine 27–cysteine 139, cysteine 30–cysteine 142, cysteine 41–cysteine 55, cysteine 124–cysteine 147, cysteine 128–cysteine 153, and cysteine 170–cysteine 226. At 27–295 (CLLCFTTYSE…RPEALTPSNL (269 aa)) the chain is on the extracellular side. A CXXC motif motif is present at residues 139 to 142 (CSGC). Residues 150 to 236 (PLDCPVQDVT…VIKQDQRPLA (87 aa)) form the Ig-like domain. Asparagine 243 is a glycosylation site (N-linked (GlcNAc...) asparagine). A helical membrane pass occupies residues 296-316 (FLLAVLGALASASATVLAWMF). Over 317-324 (FRWYCSGN) the chain is Cytoplasmic.

It belongs to the SPACA6 family. Forms a complex with IZUMO1 and TMEM81 on spermatocyte cell membrane required for fertilization. Detected at the sperm head, equatorial region, neck and midpiece (at protein level). Expressed in testis.

The protein localises to the cytoplasmic vesicle. Its subcellular location is the secretory vesicle. It is found in the acrosome membrane. Its function is as follows. Sperm protein required for fusion of sperm with the egg membrane during fertilization. May regulate the expression of sperm surface protein DCST2. The sequence is that of Sperm acrosome membrane-associated protein 6 from Homo sapiens (Human).